We begin with the raw amino-acid sequence, 156 residues long: RNA pyrophosphohydrolase (156 aa).

The Nudix hydrolase domain maps to 6-148 (NYRPNVAAIV…KKNIYVKVIK (143 aa)). The Nudix box motif lies at 43-64 (GGIDKGESAKNALFRELKEEIG).

It belongs to the Nudix hydrolase family. RppH subfamily. It depends on a divalent metal cation as a cofactor.

Its function is as follows. Accelerates the degradation of transcripts by removing pyrophosphate from the 5'-end of triphosphorylated RNA, leading to a more labile monophosphorylated state that can stimulate subsequent ribonuclease cleavage. This is RNA pyrophosphohydrolase from Campylobacter jejuni subsp. doylei (strain ATCC BAA-1458 / RM4099 / 269.97).